Here is a 425-residue protein sequence, read N- to C-terminus: Histidine--tRNA ligase 2 (425 aa).

Belongs to the class-II aminoacyl-tRNA synthetase family. Homodimer.

It is found in the cytoplasm. The catalysed reaction is tRNA(His) + L-histidine + ATP = L-histidyl-tRNA(His) + AMP + diphosphate + H(+). The chain is Histidine--tRNA ligase 2 from Shouchella clausii (strain KSM-K16) (Alkalihalobacillus clausii).